The primary structure comprises 252 residues: 2,5-diamino-6-ribosylamino-4(3H)-pyrimidinone 5'-phosphate reductase (252 aa).

Residues threonine 80, aspartate 84, valine 166, and 189 to 193 (GGIVI) each bind NADP(+).

Belongs to the HTP reductase family. In terms of assembly, homodimer.

The enzyme catalyses 2,5-diamino-6-(1-D-ribitylamino)pyrimidin-4(3H)-one 5'-phosphate + NADP(+) = 2,5-diamino-6-(1-D-ribosylamino)pyrimidin-4(3H)-one 5'-phosphate + NADPH + H(+). It carries out the reaction 2,5-diamino-6-(1-D-ribitylamino)pyrimidin-4(3H)-one 5'-phosphate + NAD(+) = 2,5-diamino-6-(1-D-ribosylamino)pyrimidin-4(3H)-one 5'-phosphate + NADH + H(+). The protein operates within cofactor biosynthesis; riboflavin biosynthesis. Functionally, catalyzes an early step in riboflavin biosynthesis, the NADPH-dependent reduction of the ribose side chain of 2,5-diamino-6-ribosylamino-4(3H)-pyrimidinone 5'-phosphate, yielding 2,5-diamino-6-ribitylamino-4(3H)-pyrimidinone 5'-phosphate. In Kluyveromyces lactis (strain ATCC 8585 / CBS 2359 / DSM 70799 / NBRC 1267 / NRRL Y-1140 / WM37) (Yeast), this protein is 2,5-diamino-6-ribosylamino-4(3H)-pyrimidinone 5'-phosphate reductase (RIB7).